The sequence spans 387 residues: NADPH-dependent aldehyde reductase YqhD (387 aa).

Positions 38, 40, 68, 95, 96, 99, 138, 147, 149, 160, 179, and 182 each coordinate NADP(+). Zn(2+)-binding residues include Asp194, His198, His267, and His281.

This sequence belongs to the iron-containing alcohol dehydrogenase family. In terms of assembly, homodimer. The crystals contain two dimers in the asymmetric unit. The cofactor is Zn(2+).

The catalysed reaction is a primary alcohol + NADP(+) = an aldehyde + NADPH + H(+). It catalyses the reaction butan-1-ol + NADP(+) = butanal + NADPH + H(+). The enzyme catalyses 1-propanol + NADP(+) = propanal + NADPH + H(+). It carries out the reaction allyl alcohol + NADP(+) = acrolein + NADPH + H(+). Its function is as follows. Exhibits NADPH-dependent reductase activity for a broad range of short-chain aldehydes. Shows highest catalytic efficiency toward butanal, propanal and the highly toxic aldehydes acrolein and malondialdehyde (MDA), which are produced mainly during lipid peroxidation. Mediates resistance to reactive oxygen species (ROS) elicitors, such as paraquat and potassium tellurite, probably by protecting the cell against the toxic effects of reactive aldehydes derived from membrane lipid peroxidation. Also acts, with lower efficiency, on acetaldehyde, glyceraldehyde, glycolaldehyde, methylglyoxal, glyoxal and hydroxyacetone. Could be involved in glyoxal metabolism, by catalyzing the reduction of glyoxal to glycolaldehyde, and further to 1,2-ethandiol. Catalyzes the reduction of isobutyraldehyde (2-methylpropanal) to isobutanol, and probably contributes to the production of isobutanol. Can probably catalyze the reduction of glutaraldehyde, a widely used biocide, to 1,5-pentanediol, which is non-toxic. Overexpression of YqhD protects the cells against glutaraldehyde toxicity. Can catalyze in vitro the NADPH-dependent reduction of furfural, a natural product of lignocellulosic decomposition, to the less toxic product, furfuryl alcohol. However, it is unlikely that furfural is a physiological substrate. Functionally, in contrast, Sulzenbacher et al. detected significant activities only in the presence of alcohol and NADP(+). They reported in vitro NADP(+)-dependent alcohol dehydrogenase (ADH) activity towards various alcohols, with a preference for alcohols longer than C(3), but the affinity for the substrates is poor, suggesting that these compounds are not the physiological substrates. Perez et al. did not detect dehydrogenase activity with short and medium chain alcohols such as methanol, ethanol, propanol, butanol or isopropanol. This is NADPH-dependent aldehyde reductase YqhD (yqhD) from Escherichia coli (strain K12).